The following is a 23-amino-acid chain: Coenzyme PQQ synthesis protein A (23 aa).

A cross-link (pyrroloquinoline quinone (Glu-Tyr)) is located at residues 15 to 19; that stretch reads EVTMY.

Belongs to the PqqA family.

It participates in cofactor biosynthesis; pyrroloquinoline quinone biosynthesis. Functionally, required for coenzyme pyrroloquinoline quinone (PQQ) biosynthesis. PQQ is probably formed by cross-linking a specific glutamate to a specific tyrosine residue and excising these residues from the peptide. This chain is Coenzyme PQQ synthesis protein A, found in Ectopseudomonas mendocina (strain ymp) (Pseudomonas mendocina).